Consider the following 579-residue polypeptide: Glutamine--tRNA ligase (579 aa).

Residues 41-51 carry the 'HIGH' region motif; sequence PEPNGYLHIGH. ATP contacts are provided by residues 42–44 and 48–54; these read EPN and HIGHAKA. Residues Asp-74 and Tyr-218 each contribute to the L-glutamine site. Residues Thr-237, 285–286, and 293–295 each bind ATP; these read RL and MSK. Residues 292 to 296 carry the 'KMSKS' region motif; sequence VMSKR.

The protein belongs to the class-I aminoacyl-tRNA synthetase family. As to quaternary structure, monomer.

It is found in the cytoplasm. The catalysed reaction is tRNA(Gln) + L-glutamine + ATP = L-glutaminyl-tRNA(Gln) + AMP + diphosphate. This chain is Glutamine--tRNA ligase, found in Xanthomonas euvesicatoria pv. vesicatoria (strain 85-10) (Xanthomonas campestris pv. vesicatoria).